A 297-amino-acid polypeptide reads, in one-letter code: Ribosomal RNA small subunit methyltransferase A (297 aa).

6 residues coordinate S-adenosyl-L-methionine: N31, L33, G58, E79, D104, and N129.

The protein belongs to the class I-like SAM-binding methyltransferase superfamily. rRNA adenine N(6)-methyltransferase family. RsmA subfamily.

Its subcellular location is the cytoplasm. The enzyme catalyses adenosine(1518)/adenosine(1519) in 16S rRNA + 4 S-adenosyl-L-methionine = N(6)-dimethyladenosine(1518)/N(6)-dimethyladenosine(1519) in 16S rRNA + 4 S-adenosyl-L-homocysteine + 4 H(+). Specifically dimethylates two adjacent adenosines (A1518 and A1519) in the loop of a conserved hairpin near the 3'-end of 16S rRNA in the 30S particle. May play a critical role in biogenesis of 30S subunits. The sequence is that of Ribosomal RNA small subunit methyltransferase A from Pediococcus pentosaceus (strain ATCC 25745 / CCUG 21536 / LMG 10740 / 183-1w).